A 130-amino-acid polypeptide reads, in one-letter code: Small ribosomal subunit protein uS9 (130 aa).

Positions 102-130 (GFLTRDPRMKERKKYGLKKARRSPQFSKR) are disordered. Residues 111–130 (KERKKYGLKKARRSPQFSKR) show a composition bias toward basic residues.

The protein belongs to the universal ribosomal protein uS9 family.

This is Small ribosomal subunit protein uS9 from Clostridium botulinum (strain ATCC 19397 / Type A).